The primary structure comprises 258 residues: Isoprenyl transferase (258 aa).

Aspartate 38 is a catalytic residue. A Mg(2+)-binding site is contributed by aspartate 38. Substrate contacts are provided by residues 39–42 (GNGR), tryptophan 43, arginine 51, histidine 55, and 83–85 (STE). The active-site Proton acceptor is asparagine 86. Substrate contacts are provided by residues tryptophan 87, arginine 89, arginine 206, and 212-214 (RIS). Mg(2+) is bound at residue glutamate 225.

It belongs to the UPP synthase family. Homodimer. Requires Mg(2+) as cofactor.

Functionally, catalyzes the condensation of isopentenyl diphosphate (IPP) with allylic pyrophosphates generating different type of terpenoids. The chain is Isoprenyl transferase from Bacillus cereus (strain ATCC 10987 / NRS 248).